The sequence spans 329 residues: 4-hydroxythreonine-4-phosphate dehydrogenase (329 aa).

Substrate is bound by residues histidine 136 and threonine 137. The a divalent metal cation site is built by histidine 166, histidine 211, and histidine 266. Substrate contacts are provided by lysine 274, asparagine 283, and arginine 292.

The protein belongs to the PdxA family. Homodimer. Requires Zn(2+) as cofactor. Mg(2+) serves as cofactor. Co(2+) is required as a cofactor.

It localises to the cytoplasm. The catalysed reaction is 4-(phosphooxy)-L-threonine + NAD(+) = 3-amino-2-oxopropyl phosphate + CO2 + NADH. Its pathway is cofactor biosynthesis; pyridoxine 5'-phosphate biosynthesis; pyridoxine 5'-phosphate from D-erythrose 4-phosphate: step 4/5. Catalyzes the NAD(P)-dependent oxidation of 4-(phosphooxy)-L-threonine (HTP) into 2-amino-3-oxo-4-(phosphooxy)butyric acid which spontaneously decarboxylates to form 3-amino-2-oxopropyl phosphate (AHAP). The chain is 4-hydroxythreonine-4-phosphate dehydrogenase from Shigella boydii serotype 18 (strain CDC 3083-94 / BS512).